A 186-amino-acid polypeptide reads, in one-letter code: Probable nicotinate-nucleotide adenylyltransferase (186 aa).

The protein belongs to the NadD family.

The enzyme catalyses nicotinate beta-D-ribonucleotide + ATP + H(+) = deamido-NAD(+) + diphosphate. It participates in cofactor biosynthesis; NAD(+) biosynthesis; deamido-NAD(+) from nicotinate D-ribonucleotide: step 1/1. In terms of biological role, catalyzes the reversible adenylation of nicotinate mononucleotide (NaMN) to nicotinic acid adenine dinucleotide (NaAD). The chain is Probable nicotinate-nucleotide adenylyltransferase from Thermus thermophilus (strain ATCC BAA-163 / DSM 7039 / HB27).